A 942-amino-acid polypeptide reads, in one-letter code: NBPF family member NBPF8 (942 aa).

A coiled-coil region spans residues 89–130 (AEELRQYKVLVHSQERELTQLKEKLQEGRDASRSLNEHLQAL). The segment at 161 to 203 (KLSPENDEDEDEDVQVEEDEKVQKSSAPREVQKAEESKVPEDS) is disordered. Residues 165–180 (ENDEDEDEDVQVEEDE) are compositionally biased toward acidic residues. Residues 165–259 (ENDEDEDEDV…ECQDALNILS (95 aa)) enclose the Olduvai 1 domain. The span at 190–201 (EVQKAEESKVPE) shows a compositional bias: basic and acidic residues. The stretch at 339–401 (KSMLRNERQF…LSLNEHLQAL (63 aa)) forms a coiled coil. 6 consecutive Olduvai domains span residues 436–528 (ENDN…HIIP), 529–617 (ENES…ATGP), 620–675 (SREL…VDMD), 676–767 (EIEK…PPCP), 770–843 (SREL…RSKK), and 844–904 (KRRR…RSVF). 2 disordered regions span residues 451–474 (EKVQKSSAPREMQKAEEKEVPEDS) and 528–566 (PENESDDEEEEEKGPVSPRNLQESEEEEVPQESWDEGYS). Acidic residues-rich tracts occupy residues 530–539 (NESDDEEEEE) and 550–562 (ESEEEEVPQESWD). Residues 831-849 (GKGKIRRGRRSKKKRRRGR) show a composition bias toward basic residues. A disordered region spans residues 831–863 (GKGKIRRGRRSKKKRRRGRKEGEEDQNPPCPRL).

It belongs to the NBPF family. In terms of tissue distribution, expressed in the mammary gland.

It localises to the cytoplasm. This is NBPF family member NBPF8 from Homo sapiens (Human).